Here is a 132-residue protein sequence, read N- to C-terminus: Small ribosomal subunit protein uS8 (132 aa).

This sequence belongs to the universal ribosomal protein uS8 family. As to quaternary structure, part of the 30S ribosomal subunit. Contacts proteins S5 and S12.

One of the primary rRNA binding proteins, it binds directly to 16S rRNA central domain where it helps coordinate assembly of the platform of the 30S subunit. The protein is Small ribosomal subunit protein uS8 of Brucella melitensis biotype 1 (strain ATCC 23456 / CCUG 17765 / NCTC 10094 / 16M).